We begin with the raw amino-acid sequence, 286 residues long: Pyridoxal kinase PdxY (286 aa).

Ser-8 contributes to the substrate binding site. The ATP site is built by Asp-110 and Glu-147. Asp-223 is a substrate binding site.

The protein belongs to the pyridoxine kinase family. PdxY subfamily. Homodimer. The cofactor is Mg(2+).

It catalyses the reaction pyridoxal + ATP = pyridoxal 5'-phosphate + ADP + H(+). Its pathway is cofactor metabolism; pyridoxal 5'-phosphate salvage; pyridoxal 5'-phosphate from pyridoxal: step 1/1. Functionally, pyridoxal kinase involved in the salvage pathway of pyridoxal 5'-phosphate (PLP). Catalyzes the phosphorylation of pyridoxal to PLP. This Granulibacter bethesdensis (strain ATCC BAA-1260 / CGDNIH1) protein is Pyridoxal kinase PdxY.